Reading from the N-terminus, the 177-residue chain is ATP synthase subunit delta (177 aa).

It belongs to the ATPase delta chain family. As to quaternary structure, F-type ATPases have 2 components, F(1) - the catalytic core - and F(0) - the membrane proton channel. F(1) has five subunits: alpha(3), beta(3), gamma(1), delta(1), epsilon(1). F(0) has three main subunits: a(1), b(2) and c(10-14). The alpha and beta chains form an alternating ring which encloses part of the gamma chain. F(1) is attached to F(0) by a central stalk formed by the gamma and epsilon chains, while a peripheral stalk is formed by the delta and b chains.

Its subcellular location is the cell inner membrane. F(1)F(0) ATP synthase produces ATP from ADP in the presence of a proton or sodium gradient. F-type ATPases consist of two structural domains, F(1) containing the extramembraneous catalytic core and F(0) containing the membrane proton channel, linked together by a central stalk and a peripheral stalk. During catalysis, ATP synthesis in the catalytic domain of F(1) is coupled via a rotary mechanism of the central stalk subunits to proton translocation. Its function is as follows. This protein is part of the stalk that links CF(0) to CF(1). It either transmits conformational changes from CF(0) to CF(1) or is implicated in proton conduction. The protein is ATP synthase subunit delta of Shewanella frigidimarina (strain NCIMB 400).